The chain runs to 756 residues: Tubulin glycylase 3B (756 aa).

Residues 104–123 (TPLPRTVTSSPTAPEAQKRQ) form a disordered region. In terms of domain architecture, TTL spans 272 to 629 (LEERMAFIED…DLPKNPTAAT (358 aa)). ATP contacts are provided by residues 440–443 (QKYI), Lys453, and Asp455. The interval 709 to 736 (ITKKKKLSASAGSSTAASAQPSTQNLTT) is disordered. Residues 716–727 (SASAGSSTAASA) are compositionally biased toward low complexity.

The protein resides in the cytoplasm. It is found in the cytoskeleton. It localises to the nucleus. In terms of biological role, essential glycylase which modifies both tubulin and non-tubulin proteins, generating side chains of glycine on the gamma-carboxyl groups of specific glutamate residues of target proteins. Monoglycylates alpha-tubulin by adding a single glycine chain to generate monoglycine side chains, but is not involved in elongation step to generate polyglycine side chains on alpha-tubulin. Has the ability to both mono- and polyglycylate non-tubulin proteins such as up (Troponin T). Required for early steps of spermatogenesis. In Drosophila melanogaster (Fruit fly), this protein is Tubulin glycylase 3B (TTLL3B).